A 145-amino-acid polypeptide reads, in one-letter code: Ribonuclease H (145 aa).

Positions 1–141 constitute an RNase H type-1 domain; sequence MQEVELFTDG…VDELANQAMD (141 aa). Mg(2+) is bound by residues Asp9, Glu47, Asp69, and Asp133.

Belongs to the RNase H family. As to quaternary structure, monomer. It depends on Mg(2+) as a cofactor.

It is found in the cytoplasm. The catalysed reaction is Endonucleolytic cleavage to 5'-phosphomonoester.. Functionally, endonuclease that specifically degrades the RNA of RNA-DNA hybrids. The chain is Ribonuclease H from Hydrogenovibrio crunogenus (strain DSM 25203 / XCL-2) (Thiomicrospira crunogena).